A 106-amino-acid chain; its full sequence is Iron-sulfur cluster assembly protein CyaY (106 aa).

This sequence belongs to the frataxin family.

In terms of biological role, involved in iron-sulfur (Fe-S) cluster assembly. May act as a regulator of Fe-S biogenesis. The protein is Iron-sulfur cluster assembly protein CyaY of Salmonella arizonae (strain ATCC BAA-731 / CDC346-86 / RSK2980).